The sequence spans 270 residues: Acetyl-coenzyme A carboxylase carboxyl transferase subunit beta (270 aa).

Residues 16-270 enclose the CoA carboxyltransferase N-terminal domain; it reads LFAKCPACKH…KLLAFHGGSK (255 aa). The Zn(2+) site is built by cysteine 20, cysteine 23, cysteine 38, and cysteine 41. A C4-type zinc finger spans residues 20–41; sequence CPACKHMIYQKDLGLEKICPKC.

This sequence belongs to the AccD/PCCB family. As to quaternary structure, acetyl-CoA carboxylase is a heterohexamer composed of biotin carboxyl carrier protein (AccB), biotin carboxylase (AccC) and two subunits each of ACCase subunit alpha (AccA) and ACCase subunit beta (AccD). Requires Zn(2+) as cofactor.

The protein resides in the cytoplasm. It carries out the reaction N(6)-carboxybiotinyl-L-lysyl-[protein] + acetyl-CoA = N(6)-biotinyl-L-lysyl-[protein] + malonyl-CoA. Its pathway is lipid metabolism; malonyl-CoA biosynthesis; malonyl-CoA from acetyl-CoA: step 1/1. Component of the acetyl coenzyme A carboxylase (ACC) complex. Biotin carboxylase (BC) catalyzes the carboxylation of biotin on its carrier protein (BCCP) and then the CO(2) group is transferred by the transcarboxylase to acetyl-CoA to form malonyl-CoA. This Streptococcus mutans serotype c (strain NN2025) protein is Acetyl-coenzyme A carboxylase carboxyl transferase subunit beta.